The chain runs to 148 residues: Macrodomain Ter protein (148 aa).

Belongs to the MatP family. Homodimer.

It is found in the cytoplasm. In terms of biological role, required for spatial organization of the terminus region of the chromosome (Ter macrodomain) during the cell cycle. Prevents early segregation of duplicated Ter macrodomains during cell division. Binds specifically to matS, which is a 13 bp signature motif repeated within the Ter macrodomain. This Haemophilus influenzae (strain ATCC 51907 / DSM 11121 / KW20 / Rd) protein is Macrodomain Ter protein.